The primary structure comprises 493 residues: 3-octaprenyl-4-hydroxybenzoate carboxy-lyase (493 aa).

Residue Asn172 coordinates Mn(2+). Residues 175 to 177 (IYR), 189 to 191 (RWL), and 194 to 195 (RG) contribute to the prenylated FMN site. Residue Glu238 coordinates Mn(2+). Asp287 functions as the Proton donor in the catalytic mechanism.

The protein belongs to the UbiD family. In terms of assembly, homohexamer. Prenylated FMN serves as cofactor. It depends on Mn(2+) as a cofactor.

It is found in the cell membrane. The enzyme catalyses a 4-hydroxy-3-(all-trans-polyprenyl)benzoate + H(+) = a 2-(all-trans-polyprenyl)phenol + CO2. The protein operates within cofactor biosynthesis; ubiquinone biosynthesis. Its function is as follows. Catalyzes the decarboxylation of 3-octaprenyl-4-hydroxy benzoate to 2-octaprenylphenol, an intermediate step in ubiquinone biosynthesis. In Shewanella frigidimarina (strain NCIMB 400), this protein is 3-octaprenyl-4-hydroxybenzoate carboxy-lyase.